Consider the following 313-residue polypeptide: 7,8-didemethyl-8-hydroxy-5-deazariboflavin synthase (313 aa).

The 232-residue stretch at 4–235 (ITYSPAYTLV…AEITLQIPPN (232 aa)) folds into the Radical SAM core domain. The [4Fe-4S] cluster site is built by Cys18, Cys22, and Cys25.

It belongs to the radical SAM superfamily. CofG family. As to quaternary structure, consists of two subunits, CofG and CofH. [4Fe-4S] cluster is required as a cofactor.

The catalysed reaction is 5-amino-5-(4-hydroxybenzyl)-6-(D-ribitylimino)-5,6-dihydrouracil + S-adenosyl-L-methionine = 7,8-didemethyl-8-hydroxy-5-deazariboflavin + 5'-deoxyadenosine + L-methionine + NH4(+) + H(+). Its pathway is cofactor biosynthesis; coenzyme F0 biosynthesis. In terms of biological role, catalyzes the radical-mediated synthesis of 7,8-didemethyl-8-hydroxy-5-deazariboflavin from 5-amino-5-(4-hydroxybenzyl)-6-(D-ribitylimino)-5,6-dihydrouracil. This is 7,8-didemethyl-8-hydroxy-5-deazariboflavin synthase from Synechocystis sp. (strain ATCC 27184 / PCC 6803 / Kazusa).